We begin with the raw amino-acid sequence, 342 residues long: Protein-glutamate methylesterase/protein-glutamine glutaminase 2 (342 aa).

The Response regulatory domain maps to 2 to 119 (NIGIVNDLPL…GGSADPSQPL (118 aa)). 4-aspartylphosphate is present on Asp-53. Residues 144–337 (PAPQGALPPL…DQLISLVQRN (194 aa)) form the CheB-type methylesterase domain. Catalysis depends on residues Ser-159, His-186, and Asp-279.

The protein belongs to the CheB family. Phosphorylated by CheA. Phosphorylation of the N-terminal regulatory domain activates the methylesterase activity.

It is found in the cytoplasm. It carries out the reaction [protein]-L-glutamate 5-O-methyl ester + H2O = L-glutamyl-[protein] + methanol + H(+). The enzyme catalyses L-glutaminyl-[protein] + H2O = L-glutamyl-[protein] + NH4(+). Its function is as follows. Involved in chemotaxis. Part of a chemotaxis signal transduction system that modulates chemotaxis in response to various stimuli. Catalyzes the demethylation of specific methylglutamate residues introduced into the chemoreceptors (methyl-accepting chemotaxis proteins or MCP) by CheR. Also mediates the irreversible deamidation of specific glutamine residues to glutamic acid. The polypeptide is Protein-glutamate methylesterase/protein-glutamine glutaminase 2 (Burkholderia mallei (strain ATCC 23344)).